A 307-amino-acid polypeptide reads, in one-letter code: RHOMBOID-like protein 6, mitochondrial (307 aa).

A mitochondrion-targeting transit peptide spans 1-62 (MRSRDMERGR…DCVAKLLRRF (62 aa)). A run of 6 helical transmembrane segments spans residues 105-125 (WLHA…IFGI), 136-156 (IGLI…LFLQ), 159-179 (ISVG…SELL), 191-211 (ALLS…LPWV), 214-234 (FAHI…LMQP), and 262-282 (LFFV…VMLF). Ser-164 serves as the catalytic Nucleophile. Residue His-216 is the Charge relay system of the active site.

The protein belongs to the peptidase S54 family.

It localises to the mitochondrion membrane. The enzyme catalyses Cleaves type-1 transmembrane domains using a catalytic dyad composed of serine and histidine that are contributed by different transmembrane domains.. In terms of biological role, probable rhomboid-type serine protease that catalyzes intramembrane proteolysis. Might be involved in response to abiotic stimuli. This Arabidopsis thaliana (Mouse-ear cress) protein is RHOMBOID-like protein 6, mitochondrial.